Reading from the N-terminus, the 129-residue chain is Small ribosomal subunit protein uS8 (129 aa).

Belongs to the universal ribosomal protein uS8 family. As to quaternary structure, part of the 30S ribosomal subunit. Contacts proteins S5 and S12.

In terms of biological role, one of the primary rRNA binding proteins, it binds directly to 16S rRNA central domain where it helps coordinate assembly of the platform of the 30S subunit. This is Small ribosomal subunit protein uS8 from Bdellovibrio bacteriovorus (strain ATCC 15356 / DSM 50701 / NCIMB 9529 / HD100).